The primary structure comprises 510 residues: DNA nucleotidylexotransferase (510 aa).

The Nuclear localization signal motif lies at P11 to K17. The BRCT domain maps to K27 to R124. The segment at V254–T258 is involved in DNA binding. Residues G329–N334 and H338–D341 contribute to the a 2'-deoxyribonucleoside 5'-triphosphate site. The Mg(2+) site is built by D339, D341, and D434. G449–W450 provides a ligand contact to a 2'-deoxyribonucleoside 5'-triphosphate.

The protein belongs to the DNA polymerase type-X family. The cofactor is Mg(2+).

The protein localises to the nucleus. The catalysed reaction is DNA(n) + a 2'-deoxyribonucleoside 5'-triphosphate = DNA(n+1) + diphosphate. Its function is as follows. Template-independent DNA polymerase which catalyzes the random addition of deoxynucleoside 5'-triphosphate to the 3'-end of a DNA initiator. One of the in vivo functions of this enzyme is the addition of nucleotides at the junction (N region) of rearranged Ig heavy chain and T-cell receptor gene segments during the maturation of B- and T-cells. This is DNA nucleotidylexotransferase (DNTT) from Ambystoma mexicanum (Axolotl).